A 452-amino-acid polypeptide reads, in one-letter code: Bifunctional purine biosynthesis protein PurH (452 aa).

The MGS-like domain occupies 1-115 (MKRILVSLYE…KNWKKVKPAF (115 aa)).

The protein belongs to the PurH family.

It catalyses the reaction (6R)-10-formyltetrahydrofolate + 5-amino-1-(5-phospho-beta-D-ribosyl)imidazole-4-carboxamide = 5-formamido-1-(5-phospho-D-ribosyl)imidazole-4-carboxamide + (6S)-5,6,7,8-tetrahydrofolate. The enzyme catalyses IMP + H2O = 5-formamido-1-(5-phospho-D-ribosyl)imidazole-4-carboxamide. It participates in purine metabolism; IMP biosynthesis via de novo pathway; 5-formamido-1-(5-phospho-D-ribosyl)imidazole-4-carboxamide from 5-amino-1-(5-phospho-D-ribosyl)imidazole-4-carboxamide (10-formyl THF route): step 1/1. Its pathway is purine metabolism; IMP biosynthesis via de novo pathway; IMP from 5-formamido-1-(5-phospho-D-ribosyl)imidazole-4-carboxamide: step 1/1. The chain is Bifunctional purine biosynthesis protein PurH from Thermotoga maritima (strain ATCC 43589 / DSM 3109 / JCM 10099 / NBRC 100826 / MSB8).